The following is a 156-amino-acid chain: Protein E6 (156 aa).

Zinc fingers lie at residues 42–78 (CHYC…CSQC) and 115–151 (CVRC…CVRC).

Belongs to the papillomaviridae E6 protein family. In terms of assembly, forms homodimers. Interacts with ubiquitin-protein ligase UBE3A/E6-AP; this interaction stimulates UBE3A ubiquitin activity. Interacts with host BAK1.

It is found in the host cytoplasm. The protein resides in the host nucleus. In terms of biological role, plays a major role in the induction and maintenance of cellular transformation. E6 associates with host UBE3A/E6-AP ubiquitin-protein ligase and modulates its activity. Protects host keratinocytes from apoptosis by mediating the degradation of host BAK1. May also inhibit host immune response. This is Protein E6 from Homo sapiens (Human).